The chain runs to 498 residues: Dynein regulatory complex subunit 5 (498 aa).

Disordered regions lie at residues 27–52 and 200–223; these read ALGSSSTGPTSLKTSSTPTPGQLKTK and MPTPLQGEEQSDSGSEGEGSEPEK. Low complexity predominate over residues 28 to 47; the sequence is LGSSSTGPTSLKTSSTPTPG. 6 LRR repeats span residues 276 to 299, 306 to 327, 333 to 353, 361 to 382, 389 to 409, and 417 to 438; these read CHTLKIFKLTRSKVDDDKARILIR, ALEELDLSHNLIGDRGARAAAK, RLRVLNLANNQLQAPGAQSLA, NLVFLNLRLNCIEDEGGQAIAH, CLSVLHLGGNKLSEPTATLLS, and TLVSLNLSCNHIGQDGGKQLLE.

This sequence belongs to the DRC5 family. As to quaternary structure, component of the nexin-dynein regulatory complex (N-DRC). Interacts with DRC1. Interacts with FBXL13/DRC6, DRC3 and DRC7. Testis-specific (at protein level).

The protein resides in the cell projection. The protein localises to the cilium. It is found in the flagellum. Its subcellular location is the cytoplasm. It localises to the cytoskeleton. The protein resides in the flagellum axoneme. Its function is as follows. Component of the nexin-dynein regulatory complex (N-DRC) a key regulator of ciliary/flagellar motility which maintains the alignment and integrity of the distal axoneme and regulates microtubule sliding in motile axonemes. May play a role in the assembly of N-DRC. Required for sperm motility. The sequence is that of Dynein regulatory complex subunit 5 (Tcte1) from Mus musculus (Mouse).